Here is a 330-residue protein sequence, read N- to C-terminus: Beta-hexosaminidase (330 aa).

Residues aspartate 62, arginine 70, arginine 130, and 160-161 contribute to the substrate site; that span reads KH. Catalysis depends on histidine 173, which acts as the Proton donor/acceptor. Aspartate 242 acts as the Nucleophile in catalysis.

This sequence belongs to the glycosyl hydrolase 3 family. NagZ subfamily. Monomer.

Its subcellular location is the cytoplasm. It catalyses the reaction Hydrolysis of terminal non-reducing N-acetyl-D-hexosamine residues in N-acetyl-beta-D-hexosaminides.. It functions in the pathway cell wall biogenesis; peptidoglycan recycling. In terms of biological role, plays a role in peptidoglycan recycling by cleaving the terminal beta-1,4-linked N-acetylglucosamine (GlcNAc) from peptide-linked peptidoglycan fragments, giving rise to free GlcNAc, anhydro-N-acetylmuramic acid and anhydro-N-acetylmuramic acid-linked peptides. Plays a role in beta-lactam antibiotic resistance via its role in generating anhydro-N-acetylmuramic acid-linked peptides; these peptides function as signaling molecules that induce high-level expression of the beta-lactamase AmpC. The chain is Beta-hexosaminidase from Vibrio cholerae serotype O1 (strain ATCC 39315 / El Tor Inaba N16961).